The sequence spans 308 residues: CD276 antigen homolog (308 aa).

The N-terminal stretch at 1–15 (MAALCLLLLLSLAEA) is a signal peptide. Residues 16–236 (IDLRVPELPV…VTGQHLSFPP (221 aa)) are Extracellular-facing. One can recognise an Ig-like V-type domain in the interval 21-125 (PELPVIGLLD…VQNSSSASVS (105 aa)). 2 cysteine pairs are disulfide-bonded: C37-C112 and C155-C210. Residues 135–228 (PTLHLEPSEA…DVTHASLTVT (94 aa)) form the Ig-like C2-type domain. Residues 237–257 (LVLWVTVGLSICLLCLLVALA) form a helical membrane-spanning segment. Topologically, residues 258 to 308 (CVCRKHLKQTCEEEQENAGNEEHEENGELKTAMQPLKVTSPGEDDDAECLE) are cytoplasmic. The segment at 270-308 (EEQENAGNEEHEENGELKTAMQPLKVTSPGEDDDAECLE) is disordered. The segment covering 299–308 (GEDDDAECLE) has biased composition (acidic residues).

This sequence belongs to the immunoglobulin superfamily. BTN/MOG family.

Its subcellular location is the membrane. Its function is as follows. Modulates immune responses. In Xenopus laevis (African clawed frog), this protein is CD276 antigen homolog (cd276).